The chain runs to 451 residues: MSEQKPVQWASKIGFVMAAAGSAIGLGAIWKFPYVAGTNGGGAFFLIFVLFTILLGYPLLVGEFIFGRRNQTNAIDAYKKEAPRSAWFLTGWIGVAACFLVLSFYSVIGGWILLYIVKTASGSLSGLSQAQYGALFASIIQNPVQTLAAQLVFMALTVLVVARGVQKGIERVSAVMMPILFLLFILLVLRSLTLNGAMEGVKFLLVPHFGDLTPESILFALGQAFFTLTLGVSVMVTYSSYLPKTQNIPRSAASIVLMNIIVTLLAGLAIFPAVFSFGFQPNEGPTLLFTVLPAVFEQLPFGTLFFIGFLVAFLFAALTSAFSMVEIIVATIGKGDEKKRKKLSWTSGLLIFLVGIPCCLSYGVLSDVHLFGKTFFDIADFTVSNVLMPSGALLISLFIPLKISKSELLAEMRNGSNAGKAFFYTWFYLLRFIVPLAIIIVFLNLIGILSF.

11 consecutive transmembrane segments (helical) span residues 13–33 (IGFV…WKFP), 41–61 (GGAF…PLLV), 97–117 (ACFL…LYIV), 142–162 (NPVQ…LVVA), 174–194 (AVMM…SLTL), 217–237 (ILFA…VMVT), 255–275 (IVLM…PAVF), 299–319 (LPFG…AALT), 345–365 (WTSG…YGVL), 381–401 (FTVS…FIPL), and 429–449 (LLRF…IGIL).

It belongs to the sodium:neurotransmitter symporter (SNF) (TC 2.A.22) family.

It localises to the cell membrane. Its function is as follows. Putative sodium-dependent transporter. This is an uncharacterized protein from Bacillus subtilis (strain 168).